A 173-amino-acid chain; its full sequence is Lipoprotein signal peptidase (173 aa).

The next 2 membrane-spanning stretches (helical) occupy residues 67–87 (WISLLVSVGLCVYALVGPHLG) and 92–112 (MGFGLLLGGAVGNGFDRFAFG). Catalysis depends on residues aspartate 116 and aspartate 132. A helical membrane pass occupies residues 125–145 (FPVFNGADIAINLGLACLLIG). The segment at 151 to 173 (SRTPAPARPASKQIREPTDTTGG) is disordered. Residues 163 to 173 (QIREPTDTTGG) are compositionally biased toward basic and acidic residues.

It belongs to the peptidase A8 family.

The protein resides in the cell inner membrane. The catalysed reaction is Release of signal peptides from bacterial membrane prolipoproteins. Hydrolyzes -Xaa-Yaa-Zaa-|-(S,diacylglyceryl)Cys-, in which Xaa is hydrophobic (preferably Leu), and Yaa (Ala or Ser) and Zaa (Gly or Ala) have small, neutral side chains.. The protein operates within protein modification; lipoprotein biosynthesis (signal peptide cleavage). Its function is as follows. This protein specifically catalyzes the removal of signal peptides from prolipoproteins. This is Lipoprotein signal peptidase from Gloeobacter violaceus (strain ATCC 29082 / PCC 7421).